A 291-amino-acid chain; its full sequence is Lysosomal amino acid transporter 1 homolog (291 aa).

Residues 1–37 (MVWKKLGSRNFSSCPSGSIQWIWDVLGECAQDGWDEA) lie on the Lumenal side of the membrane. N-linked (GlcNAc...) asparagine glycosylation is present at Asn10. The region spanning 34 to 100 (WDEASVGLGL…LADQLPLQTY (67 aa)) is the PQ-loop 1 domain. Residues 38–58 (SVGLGLISILCFAASTFPQFI) form a helical membrane-spanning segment. The Cytoplasmic segment spans residues 59 to 71 (KAYKTGNMDQALS). A helical membrane pass occupies residues 72 to 92 (LWFLLGWIGGDSCNLIGSFLA). Over 93 to 98 (DQLPLQ) the chain is Lumenal. The chain crosses the membrane as a helical span at residues 99-119 (TYTAVYYVLADLVMLTLYFYY). Residues 120–134 (KFRTRPSLLSAPINS) lie on the Cytoplasmic side of the membrane. The chain crosses the membrane as a helical span at residues 135 to 155 (VLLFLMGMACATPLLSAAGPV). Residues 156-182 (AAPREAFRGRALLSVESGSKPFTRQEV) are Lumenal-facing. Residues 183-203 (IGFVIGSISSVLYLLSRLPQI) form a helical membrane-spanning segment. The PQ-loop 2 domain occupies 184-243 (GFVIGSISSVLYLLSRLPQIRTNFLRKSTQGISYSLFALVMLGNTLYGLSVLLKNPEEGQ). Topologically, residues 204–214 (RTNFLRKSTQG) are cytoplasmic. Residues 215 to 235 (ISYSLFALVMLGNTLYGLSVL) traverse the membrane as a helical segment. Residues 236-254 (LKNPEEGQSEGSYLLHHLP) lie on the Lumenal side of the membrane. The chain crosses the membrane as a helical span at residues 255–275 (WLVGSLGVLLLDTIISIQFLV). At 276–291 (YRRSTAASELEPLLPS) the chain is on the cytoplasmic side. The short motif at 288-289 (LL) is the Di-leucine motif element.

Belongs to the laat-1 family.

The protein resides in the lysosome membrane. In terms of biological role, amino acid transporter that specifically mediates the pH-dependent export of the cationic amino acids arginine, histidine and lysine from lysosomes. In Homo sapiens (Human), this protein is Lysosomal amino acid transporter 1 homolog.